The chain runs to 416 residues: E3 ubiquitin-protein ligase DMA1 (416 aa).

Residues 1-30 (MSTNTVPSSPPNQTPPAASGIATSHDHTKF) are disordered. Residues K150, K204, K217, K237, K240, K260, K300, K306, K313, and K317 each participate in a glycyl lysine isopeptide (Lys-Gly) (interchain with G-Cter in ubiquitin) cross-link. Residues 189-252 (IIIGRYTERV…SGTFLNHQRL (64 aa)) form the FHA domain. The RING-type zinc finger occupies 327–371 (CSICLNKIKPCQAIFISPCAHSWHFHCVRRLVIMNYPQFMCPNCR).

Belongs to the DMA1 family. Interacts with CDC123. Interacts with PCL1. Post-translationally, UBC4-dependent autoubiquitination occurs at Lys-150, Lys-204, Lys-217, Lys-237, Lys-240, Lys-260, Lys-300, Lys-306, Lys-313 and Lys-317. UBC4-dependent autoubiquitination is responsible for DMA2 turnover. UBC13/MMS2-dependent autoubiquitination occurs at Lys-237 and Lys-306. Lys-204 and Lys-306 are also ubiquitinated in trans by DMA2 E3 ligase in association with UBC4.

It is found in the cytoplasm. It catalyses the reaction S-ubiquitinyl-[E2 ubiquitin-conjugating enzyme]-L-cysteine + [acceptor protein]-L-lysine = [E2 ubiquitin-conjugating enzyme]-L-cysteine + N(6)-ubiquitinyl-[acceptor protein]-L-lysine.. E3 ubiquitin-protein ligase which functions in cell cycle retarding in conjunction with the UBC4 and UBC13/MMS2 complex, 2 E2 ubiquitin conjugating enzymes. Involved in nutritional control of the cell cycle. Targets the G1 cyclin PCL1 for destruction. Required for proper spindle positioning, likely regulating septin ring deposition at the bud neck. This is E3 ubiquitin-protein ligase DMA1 from Saccharomyces cerevisiae (strain ATCC 204508 / S288c) (Baker's yeast).